The primary structure comprises 682 residues: MIDQYKHQQLRIGSVSPQQISAWATKILPNGEIVGEVTKPYTFHYKTNKPEKDGLFCERIFGPIKSGICTCGNYRVIGDKKDEPKFCEQCGVEFVDSRIRRYQMGYIKLACPVTHVWYLKRLPSYIANLLDKPLKELEGLVYCDFSFARPVVKKPTFLRLRGLFEYEIQSWKYSIPLFFATHGFDTFRNREISSGAGAIREQLVDLDLRIVIDSSLVEWKELGEERSTHNENEWEDRKVGRRKNFLVRRMELAKHFIRTNIEPEWMVLCLLPVLPPELRPIIQIDGGKLMSSDINELYRRVIYRNNTLIDLLTTSRSTPGELVMCQEKLVQEAVDTLLDNGIRGQPMKDGHNKVYKSFSDIIEGKEGRFRETLLGKRVDYSGRSVIVVGPSLSLHRCGLPREIAIELFQTFLIRSLIRKHFASNIGVAKSKIREKEPIVWEILQEVMRGHPILLNRAPTLHRLGIQAFQPILVEGRAICLHPLVCKGFNADFDGDQMAIHVPLSLEAQAEARLLMFSHTNLLSPAIGDPIAVPTQDMLIGLYILTSGNRRGICANRYNRSNWKNSKNEKIRDKKYMKKKEPFFSNSYDAIGAFRQKKINFDSPFWLRWRLDKCIMSSREAPIEVHYESLGTYHDIYEHYLVIRSIKKQICCIYIRTTIGHISFYREIEEAIQGFCRGYSYGI.

Residues C69, C71, C87, and C90 each coordinate Zn(2+). Mg(2+) contacts are provided by D491, D493, and D495.

Belongs to the RNA polymerase beta' chain family. RpoC1 subfamily. In terms of assembly, in plastids the minimal PEP RNA polymerase catalytic core is composed of four subunits: alpha, beta, beta', and beta''. When a (nuclear-encoded) sigma factor is associated with the core the holoenzyme is formed, which can initiate transcription. Mg(2+) is required as a cofactor. The cofactor is Zn(2+).

The protein resides in the plastid. Its subcellular location is the chloroplast. It catalyses the reaction RNA(n) + a ribonucleoside 5'-triphosphate = RNA(n+1) + diphosphate. Its function is as follows. DNA-dependent RNA polymerase catalyzes the transcription of DNA into RNA using the four ribonucleoside triphosphates as substrates. The sequence is that of DNA-directed RNA polymerase subunit beta' from Lotus japonicus (Lotus corniculatus var. japonicus).